The chain runs to 647 residues: Cartilage acidic protein 1 (647 aa).

The first 30 residues, 1–30 (MMLPADFFVPVSKMMLLALLLSIIICCGGA), serve as a signal peptide directing secretion. The stretch at 48-90 (DYDSNPTQLNYGVAITDVDNDGDFEVVVAGYNGPNLVLKYIKE) is one FG-GAP 1; atypical repeat. Residues 107-149 (YALRDRQGNAIGVAACDIDGDGREEIYFLNTNNAFSGIATYSD) form an FG-GAP 2; atypical repeat. One copy of the FG-GAP 3; atypical repeat lies at 285–335 (TGVDDVYQHGRGVALADFNRDGKVDIVYGNWNGPHRLFLQMNTNGKVRFRD). An FG-GAP 4; atypical repeat occupies 397–439 (GDASEPDGRGTGGAVTDFDGDGMLDLILSHGESMAQPLSVFKG). The EGF-like domain maps to 561 to 607 (DTDECIQFPFVCPREKPVCINTYGGYKCRPNRRCSRGFEPNEDGTAC). Disulfide bonds link Cys565/Cys579, Cys572/Cys588, and Cys594/Cys607.

It is found in the secreted. It localises to the extracellular space. The protein resides in the extracellular matrix. This is Cartilage acidic protein 1 (crtac1) from Xenopus tropicalis (Western clawed frog).